The following is a 491-amino-acid chain: UDP-N-acetylmuramoyl-L-alanyl-D-glutamate--2,6-diaminopimelate ligase (491 aa).

Ser-30 provides a ligand contact to UDP-N-acetyl-alpha-D-muramoyl-L-alanyl-D-glutamate. Position 108 to 114 (108 to 114 (GTNGKTT)) interacts with ATP. UDP-N-acetyl-alpha-D-muramoyl-L-alanyl-D-glutamate is bound by residues Asn-149, 150–151 (TT), Ser-177, Gln-183, and Arg-185. The residue at position 217 (Lys-217) is an N6-carboxylysine. Residues Arg-383, 407 to 410 (DNPR), Gly-458, and Glu-462 contribute to the meso-2,6-diaminopimelate site. Positions 407–410 (DNPR) match the Meso-diaminopimelate recognition motif motif.

This sequence belongs to the MurCDEF family. MurE subfamily. Requires Mg(2+) as cofactor. In terms of processing, carboxylation is probably crucial for Mg(2+) binding and, consequently, for the gamma-phosphate positioning of ATP.

It is found in the cytoplasm. The enzyme catalyses UDP-N-acetyl-alpha-D-muramoyl-L-alanyl-D-glutamate + meso-2,6-diaminopimelate + ATP = UDP-N-acetyl-alpha-D-muramoyl-L-alanyl-gamma-D-glutamyl-meso-2,6-diaminopimelate + ADP + phosphate + H(+). Its pathway is cell wall biogenesis; peptidoglycan biosynthesis. Catalyzes the addition of meso-diaminopimelic acid to the nucleotide precursor UDP-N-acetylmuramoyl-L-alanyl-D-glutamate (UMAG) in the biosynthesis of bacterial cell-wall peptidoglycan. The sequence is that of UDP-N-acetylmuramoyl-L-alanyl-D-glutamate--2,6-diaminopimelate ligase from Listeria monocytogenes serotype 4b (strain F2365).